A 484-amino-acid chain; its full sequence is Phosphomethylpyrimidine synthase (484 aa).

Substrate contacts are provided by residues asparagine 97, methionine 126, tyrosine 156, histidine 192, 212–214 (SRG), 253–256 (DSLR), and glutamate 292. Histidine 296 is a Zn(2+) binding site. Tyrosine 319 serves as a coordination point for substrate. Residue histidine 360 coordinates Zn(2+). The [4Fe-4S] cluster site is built by cysteine 440, cysteine 443, and cysteine 448.

Belongs to the ThiC family. Requires [4Fe-4S] cluster as cofactor.

The catalysed reaction is 5-amino-1-(5-phospho-beta-D-ribosyl)imidazole + S-adenosyl-L-methionine = 4-amino-2-methyl-5-(phosphooxymethyl)pyrimidine + CO + 5'-deoxyadenosine + formate + L-methionine + 3 H(+). It participates in cofactor biosynthesis; thiamine diphosphate biosynthesis. In terms of biological role, catalyzes the synthesis of the hydroxymethylpyrimidine phosphate (HMP-P) moiety of thiamine from aminoimidazole ribotide (AIR) in a radical S-adenosyl-L-methionine (SAM)-dependent reaction. The protein is Phosphomethylpyrimidine synthase of Synechococcus sp. (strain CC9605).